We begin with the raw amino-acid sequence, 344 residues long: DNA-directed RNA polymerase subunit alpha (344 aa).

The segment at 1–238 (MKVIKTAPLI…KQLGVFGERP (238 aa)) is alpha N-terminal domain (alpha-NTD). An alpha C-terminal domain (alpha-CTD) region spans residues 254–344 (AKDLSAKIES…EKLEDKGGND (91 aa)).

The protein belongs to the RNA polymerase alpha chain family. As to quaternary structure, homodimer. The RNAP catalytic core consists of 2 alpha, 1 beta, 1 beta' and 1 omega subunit. When a sigma factor is associated with the core the holoenzyme is formed, which can initiate transcription.

The enzyme catalyses RNA(n) + a ribonucleoside 5'-triphosphate = RNA(n+1) + diphosphate. In terms of biological role, DNA-dependent RNA polymerase catalyzes the transcription of DNA into RNA using the four ribonucleoside triphosphates as substrates. This Helicobacter pylori (strain ATCC 700392 / 26695) (Campylobacter pylori) protein is DNA-directed RNA polymerase subunit alpha.